The following is a 599-amino-acid chain: Beta-(1--&gt;2)glucan export ATP-binding/permease protein NdvA (599 aa).

Residues 21–301 (TITMCVASVL…ISAFINQTVT (281 aa)) form the ABC transmembrane type-1 domain. 5 consecutive transmembrane segments (helical) span residues 22–42 (ITMCVASVLVALVTLAEPVLF), 55–75 (IFSPLLMWAALGGFNIMAAVF), 156–176 (MRMSLVLIVLGVIYVMIGQLV), 248–268 (MASTFSMVVVLVLGAYFVTKG), and 276–296 (IAFIGFAQLMIGRLDQISAFI). The ABC transporter domain maps to 335-569 (IVFDNVTYEF…GGRFSDLLRA (235 aa)). Position 368-375 (368-375 (GPTGAGKT)) interacts with ATP.

This sequence belongs to the ABC transporter superfamily. Beta-(1--&gt;2)glucan exporter (TC 3.A.1.108.1) family. As to quaternary structure, homodimer.

The protein localises to the cell inner membrane. It catalyses the reaction [(1-&gt;2)-beta-D-glucosyl](n)(in) + ATP + H2O = [(1-&gt;2)-beta-D-glucosyl](n)(out) + ADP + phosphate + H(+). Functionally, involved in beta-(1--&gt;2)glucan export. Transmembrane domains (TMD) form a pore in the inner membrane and the ATP-binding domain (NBD) is responsible for energy generation. The protein is Beta-(1--&gt;2)glucan export ATP-binding/permease protein NdvA of Brucella melitensis biotype 1 (strain ATCC 23456 / CCUG 17765 / NCTC 10094 / 16M).